A 262-amino-acid chain; its full sequence is Light-harvesting complex-like protein 3 isotype 1, chloroplastic (262 aa).

The transit peptide at 1-39 (MALFSPPISSSSLQNPNFIPKFSFSLLSSNRFSLLSVTR) directs the protein to the chloroplast. 2 consecutive transmembrane segments (helical) span residues 180–200 (AAMI…VGLV) and 202–222 (QMGN…VLFI).

Interacts with GGR. Forms homodimer, and heterodimer with LIL3.2. As to expression, expressed in photosynthetically active tissues (at protein level).

The protein localises to the plastid. The protein resides in the chloroplast thylakoid membrane. Light-harvesting-like protein required for biosynthesis of phytylated chlorophylls and alpha-tocopherol in green seedlings. Functions by anchoring geranylgeranyl reductase (GGR) in the thylakoid membrane, leading to the stabilization of GGR activity. Binds chlorophyll a in the thylakoid membrane. Plays a role in the regulation of chlorophyll biosynthesis under light stress and under standard growth conditions. This Arabidopsis thaliana (Mouse-ear cress) protein is Light-harvesting complex-like protein 3 isotype 1, chloroplastic (LIL3.1).